Consider the following 1438-residue polypeptide: DNA polymerase III PolC-type (1438 aa).

Residues 422–578 (YVVFDVETTG…YDTEATAYIF (157 aa)) enclose the Exonuclease domain.

The protein belongs to the DNA polymerase type-C family. PolC subfamily.

Its subcellular location is the cytoplasm. It catalyses the reaction DNA(n) + a 2'-deoxyribonucleoside 5'-triphosphate = DNA(n+1) + diphosphate. Required for replicative DNA synthesis. This DNA polymerase also exhibits 3' to 5' exonuclease activity. The protein is DNA polymerase III PolC-type of Staphylococcus aureus (strain Mu3 / ATCC 700698).